The primary structure comprises 329 residues: MSQDRGPRRPRRLEKCALISASATVLSLTASGCVVVHGEREVLPSATRAEAAKALERFTTAYNKADKAYDASLDADHTTGALAAIDSARLKAGAANHPDGNPAHEPLELTDAKFTIPKKAGWPRWFVADTKANKGGTARWLLVFTRDGLEETWEAAYLTLVAPGKVPEFKTDQDGWAEAVPANATDVSVPPAGLSKDYTTYLQDGGKTFADGVHTSSWRALREKRSTRPGLVTQYIDEPLTNGDYAPLALRTEDGGALVFFTSRHFEKQTAARGTSVPTPNKDVLALTDGEIKQSLTMEFVSNEVALDPADGQVSVLGRVQGLTSGKGE.

Residues 1–32 (MSQDRGPRRPRRLEKCALISASATVLSLTASG) form the signal peptide. Cysteine 33 is lipidated: N-palmitoyl cysteine. Cysteine 33 is lipidated: S-diacylglycerol cysteine.

Its subcellular location is the cell membrane. This is an uncharacterized protein from Streptomyces coelicolor (strain ATCC BAA-471 / A3(2) / M145).